Reading from the N-terminus, the 922-residue chain is MFLHSVNLWNLAFYVFMVFLATLGLWDVFFGFEENKCSMSYMFEYPEYQKIELPKKLTKRYPAYELYLYGEGSYAEEHKILPLTGIPVLFLPGNAGSYKQVRSIGSIALRKAEDIDFKYHFDFFSVNFNEELVALYGGSLQKQTKFVHECIKAILKLYKGQEFAPTSVAIIGHSMGGLVARALLTLKNFKQDLINLLVTQATPHVAPVMPLDRFITEFYMNVNNYWILNARHINLTTLSVAGGFRDYQVRSGLTFLPKLSHYTSALSVVSSAVPKTWVSTDHLSIVWCKQLQLTTIRAFFDLIDADTKQITQKPKKKLSVLNHHFIRHPAKQFEENPSIISDLTGTSMWVPVKVSRWSYVAYNESDKIYFAFPLANHRKIYTHAYCQSTMLDTNSWIFGCINSTSMCRQGVDLSWKAELLPTIKSLTLRLQDYPSLSHIVVYVPSVHGSKFVVDCEFFKKEARSMQLPVTHLFSFGLSSRKVTLNTNGLYYNIELLNFGQIYQAFKVNVVSKCTGSKEEITSIYKLHIPWSYEDSLTIAQVPSSTDISLKLHVAQPENDSHVALLKMYTSSDCQYEVTIKTSFPQILGQVVRFHGGALPAYVVSSILLAYGGQLYSLLSTGYCLEYSTILDKEAKPYKVDPFVIMIKFLLGYKWFKELWDAVLLPELDAIVLTSQSMCFPLVSLILFLFGTCTAYWSGLLSSTSVQLLSSLWLALKRPAELPKDIKVMSPDLPVLTVVFLIVSWTTCGALAILLSYLYYVFKVVHLQASLTTFKNNQPVNPKHSRRSEKKSNHHKDSAVQSLRLCANDAEDSLRMHSTVINLLTWVVLLSMPSLIYWLKNLRYYFKLSPDPCKPLAFLLIPAIAILGNTHTVSVKSSKLLKTVSQFPLPLAVGVIAFGSSHLYRVPCFVIIPLVFHALCNFM.

Topologically, residues 1 to 11 (MFLHSVNLWNL) are cytoplasmic. The chain crosses the membrane as a helical span at residues 12-32 (AFYVFMVFLATLGLWDVFFGF). The Lumenal segment spans residues 33–597 (EENKCSMSYM…GQVVRFHGGA (565 aa)). The active site involves Ser174. 3 N-linked (GlcNAc...) asparagine glycosylation sites follow: Asn363, Asn402, and Asn558. The chain crosses the membrane as a helical span at residues 598-618 (LPAYVVSSILLAYGGQLYSLL). Topologically, residues 619 to 641 (STGYCLEYSTILDKEAKPYKVDP) are cytoplasmic. Residues 642 to 662 (FVIMIKFLLGYKWFKELWDAV) form a helical membrane-spanning segment. The Lumenal portion of the chain corresponds to 663 to 668 (LLPELD). A helical transmembrane segment spans residues 669-689 (AIVLTSQSMCFPLVSLILFLF). At 690 to 694 (GTCTA) the chain is on the cytoplasmic side. The chain crosses the membrane as a helical span at residues 695-715 (YWSGLLSSTSVQLLSSLWLAL). Residues 716 to 733 (KRPAELPKDIKVMSPDLP) are Lumenal-facing. The chain crosses the membrane as a helical span at residues 734–754 (VLTVVFLIVSWTTCGALAILL). The Cytoplasmic segment spans residues 755–817 (SYLYYVFKVV…DAEDSLRMHS (63 aa)). The interval 776 to 798 (NQPVNPKHSRRSEKKSNHHKDSA) is disordered. The span at 782–793 (KHSRRSEKKSNH) shows a compositional bias: basic residues. The helical transmembrane segment at 818–838 (TVINLLTWVVLLSMPSLIYWL) threads the bilayer. Over 839 to 894 (KNLRYYFKLSPDPCKPLAFLLIPAIAILGNTHTVSVKSSKLLKTVSQFPLPLAVGV) the chain is Lumenal. The chain crosses the membrane as a helical span at residues 895-915 (IAFGSSHLYRVPCFVIIPLVF). Residues 916 to 922 (HALCNFM) are Cytoplasmic-facing.

This sequence belongs to the GPI inositol-deacylase family.

It is found in the endoplasmic reticulum membrane. In terms of biological role, GPI inositol-deacylase that catalyzes the remove of the acyl chain linked to the 2-OH position of inositol ring from the GPI-anchored protein (GPI-AP) in the endoplasmic reticulum. Initiates the post-attachment remodeling phase of GPI-AP biogenesis and participates in endoplasmic reticulum (ER)-to-Golgi transport of GPI-anchored protein. This is GPI inositol-deacylase from Mus musculus (Mouse).